The primary structure comprises 856 residues: MLIKKNALSILKIVFPIAVLLFVIYQSKKELTNLSFKRTLMVINGLERTDLFMLVLIGLLAVAAMSLYDYVLKYSLRLSITNGKVFRVSWIANSFNNVLGFGGLAGVGLRMMFYKEHTKDHKALVKGIAWLTSSMLLGLSVFSIFVAARVLPVDEVIHEKPWLWAVVIGFALILPLSLAVSKIKDRKAGDEENADKVKNPIFAYIGASVVEWLMAGTVIYFALFAMGIHADIRYVFGVFVIAAIGGMISLVPGGFGSFDLLFLLGMEQLGYHQEAIVTSIVLYRLAYSFIPFILGLFFAAGDLTENTMKRLETNPRIAPAIETTNVLLVVQRAVLVRILQGSLSLIVFVAGLIVLASVSLPIDRLTVIPHIPRPALLLFNGLSLSSALILLILPIELYKRTKRSYTMAITALVGGFVFSFLKGLNISAIFVLPMIIVLLVLLKKQFVREQASYTLGQLIFAVALFTVALFNYNLIAGFIWDRMKKVLRHEYFVHSTSHITHATIMAIIIVPLFFLIFTVVYHKRTKPIGEKADPERLAAFLNEKGGNALSHLGFLGDKRFYFSSDGNALLLFGKIARRLVVLGDPSGQRESFPLVLEEFLNEAHQKGFSVLFYQIEREDMALYHDFGYNFFKLGEEAYVDLNTFTLTGKKKAGLRAINNRFEREEYTFHVDHPPFSDAFLEELKQISDEWLGSKKEKGFSLGFFDPSYLQKAPIAYMKNAEGEIVAFANVMPMYQEGEISVDLMRYRGDAPNGIMDALFIRMFLWAKEEGCTSFNMGMAPLANVGTAFTSFWSERFAAVIFNNVRYMYSFSGLRAFKEKYKPEWRGKYLAYRKNRSLSVTMFLVTRLIGKSKKDSV.

The next 13 membrane-spanning stretches (helical) occupy residues 7–27 (ALSI…IYQS), 51–71 (LFML…YDYV), 88–108 (VSWI…AGVG), 128–148 (IAWL…FVAA), 161–181 (PWLW…LAVS), 208–228 (SVVE…AMGI), 235–255 (VFGV…PGGF), 280–300 (IVLY…FFAA), 342–362 (SLSL…SLPI), 375–395 (ALLL…ILPI), 420–440 (FLKG…VLLV), 459–479 (IFAV…AGFI), and 501–521 (HATI…TVVY).

Belongs to the LPG synthase family.

Its subcellular location is the cell membrane. The enzyme catalyses L-lysyl-tRNA(Lys) + a 1,2-diacyl-sn-glycero-3-phospho-(1'-sn-glycerol) = a 1,2-diacyl-sn-glycero-3-phospho-1'-(3'-O-L-lysyl)-sn-glycerol + tRNA(Lys). In terms of biological role, catalyzes the transfer of a lysyl group from L-lysyl-tRNA(Lys) to membrane-bound phosphatidylglycerol (PG), which produces lysylphosphatidylglycerol (LPG), one of the components of the bacterial membrane with a positive net charge. LPG synthesis contributes to the resistance to cationic antimicrobial peptides (CAMPs) and likely protects B.subtilis against its own CAMPs and against those produced by competiting microorganisms (bacteriocins). In fact, the modification of anionic phosphatidylglycerol with positively charged L-lysine results in repulsion of the peptides. The chain is Phosphatidylglycerol lysyltransferase (mprF) from Bacillus subtilis (strain 168).